The sequence spans 205 residues: Nucleoside triphosphate pyrophosphatase (205 aa).

The active-site Proton acceptor is D76.

Belongs to the Maf family. The cofactor is a divalent metal cation.

The protein resides in the cytoplasm. It catalyses the reaction a ribonucleoside 5'-triphosphate + H2O = a ribonucleoside 5'-phosphate + diphosphate + H(+). The enzyme catalyses a 2'-deoxyribonucleoside 5'-triphosphate + H2O = a 2'-deoxyribonucleoside 5'-phosphate + diphosphate + H(+). In terms of biological role, nucleoside triphosphate pyrophosphatase. May have a dual role in cell division arrest and in preventing the incorporation of modified nucleotides into cellular nucleic acids. The sequence is that of Nucleoside triphosphate pyrophosphatase from Orientia tsutsugamushi (strain Boryong) (Rickettsia tsutsugamushi).